The chain runs to 582 residues: Guanine nucleotide-binding protein-like NSN1 (582 aa).

The segment covering 1–46 (MVKRSKKSKSKRVTLKQKHKVLKKVKEHHKKKAKDAKKLGLHRKPR) has biased composition (basic residues). The interval 1–58 (MVKRSKKSKSKRVTLKQKHKVLKKVKEHHKKKAKDAKKLGLHRKPRVEKDPGIPNDWP) is disordered. Positions 2–49 (VKRSKKSKSKRVTLKQKHKVLKKVKEHHKKKAKDAKKLGLHRKPRVEK) are basic. 3 short sequence motifs (nuclear localization signal) span residues 5–12 (SKKSKSKR), 22–29 (LKKVKEHH), and 69–76 (VRRARALE). Residues 15–94 (LKQKHKVLKK…RKERAKKRKL (80 aa)) adopt a coiled-coil conformation. Positions 127 to 311 (YKELVKVIEL…LLDCPGVVML (185 aa)) constitute a CP-type G domain. The short motif at 145 to 149 (DARDP) is the DARXP motif element. The interval 175 to 178 (NKID) is G4. 175–178 (NKID) serves as a coordination point for GTP. A G5 region spans residues 202-204 (KCS). A G1 region spans residues 260 to 267 (GLPNVGKS). 263–268 (NVGKSS) contacts GTP. The tract at residues 281-456 (VGATPGLTRS…NEFNPVIIPS (176 aa)) is intermediate. A G2 region spans residues 286–290 (GLTRS). Residues 304-307 (DCPG) and Gly307 contribute to the GTP site. The G3 stretch occupies residues 304–307 (DCPG). Positions 463–551 (DETMIEDESK…EEDLMDGDYD (89 aa)) are acidic. Residues 469–545 (DESKTQTEEE…KKAGADEEDL (77 aa)) form a disordered region. Over residues 476–496 (EEEAEHESDDDESMGGEEEEE) the composition is skewed to acidic residues. Basic and acidic residues predominate over residues 497-506 (AGKTKEKSET). Residues 515 to 537 (AAESMLNTKKQKAEKKKRKKAKK) adopt a coiled-coil conformation. A Nuclear localization signal 4 motif is present at residues 522-529 (TKKQKAEK). The span at 523 to 537 (KKQKAEKKKRKKAKK) shows a compositional bias: basic residues.

This sequence belongs to the TRAFAC class YlqF/YawG GTPase family. In terms of assembly, interacts with EBP2 and PES. In terms of tissue distribution, mostly expressed in flowers, siliques and inflorescence apex, and, to a lower extent, in stems and leaves.

Its subcellular location is the nucleus. It localises to the nucleolus. Involved in the differentiation of epidermal cells, probably via the regulation of the expression of meristem-related genes (e.g. CLV3, STM, KNAT1, CUC2 and AG) and of leaf polarity-related genes (e.g. YAB5, FIL, AS2, PHB and PHV). May play a role in regulating cellular proliferation. Necessary for flower development, probably by preventing apical dominance through the down-regulation of AG expression. Required for embryogenesis, leaf and cotyledon development, as well as for leaf polarity establishment. Plays an important role in plant growth and senescence by modulating ribosome biogenesis in nucleolus. Possesses GTPAse activity in vitro. Possesses RNA binding activity in vitro. Associates with ribosomes. In Arabidopsis thaliana (Mouse-ear cress), this protein is Guanine nucleotide-binding protein-like NSN1.